The primary structure comprises 117 residues: Arsenate reductase (117 aa).

Cys12 (nucleophile; cysteine thioarsenate intermediate) is an active-site residue.

This sequence belongs to the ArsC family.

It carries out the reaction [glutaredoxin]-dithiol + arsenate + glutathione + H(+) = glutathionyl-S-S-[glutaredoxin] + arsenite + H2O. Functionally, involved in resistance to arsenate. Catalyzes the reduction of arsenate [As(V)] to arsenite [As(III)]. The sequence is that of Arsenate reductase (arsC) from Neisseria meningitidis serogroup A / serotype 4A (strain DSM 15465 / Z2491).